A 391-amino-acid polypeptide reads, in one-letter code: Cell cycle checkpoint control protein RAD9A (391 aa).

Residue Tyr28 is modified to Phosphotyrosine. Residues 51–91 form a possesses 3'-5' exonuclease activity region; that stretch reads FLFAPLFFQQYQAATPGQDLLRCKILMKSFLSVFRSLAMLE. The segment at 266 to 391 is sufficient for interaction with ABL1; the sequence is SDTDSHSQDL…VLAEDSEGEG (126 aa). Basic and acidic residues predominate over residues 268–282; that stretch reads TDSHSQDLGSPERHQ. Disordered stretches follow at residues 268–301 and 319–391; these read TDSHSQDLGSPERHQPVPQLQAHSTPHPDDFAND and SRVL…EGEG. Ser272, Ser277, and Ser328 each carry phosphoserine. At Ser341 the chain carries Phosphoserine; by CK2. Phosphoserine is present on residues Ser375 and Ser380. Ser387 bears the Phosphoserine; by CK2 mark.

It belongs to the rad9 family. As to quaternary structure, component of the toroidal 9-1-1 (RAD9-RAD1-HUS1) complex, composed of RAD9A, RAD1 and HUS1. The 9-1-1 complex associates with LIG1, POLB, FEN1, RAD17, HDAC1, RPA1 and RPA2. The 9-1-1 complex associates with the RAD17-RFC complex. RAD9A interacts with BCL2L1, FEN1, RAD9B, ABL1, RPA1, ATAD5 and RPA2. Interacts with DNAJC7. Interacts (when phosphorylated) with TOPBP1. Post-translationally, constitutively phosphorylated on serine and threonine amino acids in absence of DNA damage. Hyperphosphorylated by PRKCD and ABL1 upon DNA damage. Its phosphorylation by PRKCD may be required for the formation of the 9-1-1 complex. Phosphorylated at Ser-341 and Ser-387 by CK2, promoting interaction with TOPBP1.

It is found in the nucleus. It catalyses the reaction Exonucleolytic cleavage in the 3'- to 5'-direction to yield nucleoside 5'-phosphates.. Its function is as follows. Component of the 9-1-1 cell-cycle checkpoint response complex that plays a major role in DNA repair. The 9-1-1 complex is recruited to DNA lesion upon damage by the RAD17-replication factor C (RFC) clamp loader complex. Acts then as a sliding clamp platform on DNA for several proteins involved in long-patch base excision repair (LP-BER). The 9-1-1 complex stimulates DNA polymerase beta (POLB) activity by increasing its affinity for the 3'-OH end of the primer-template and stabilizes POLB to those sites where LP-BER proceeds; endonuclease FEN1 cleavage activity on substrates with double, nick, or gap flaps of distinct sequences and lengths; and DNA ligase I (LIG1) on long-patch base excision repair substrates. The 9-1-1 complex is necessary for the recruitment of RHNO1 to sites of double-stranded breaks (DSB) occurring during the S phase. RAD9A possesses 3'-&gt;5' double stranded DNA exonuclease activity. This Homo sapiens (Human) protein is Cell cycle checkpoint control protein RAD9A (RAD9A).